The primary structure comprises 451 residues: Phosphoglucosamine mutase (451 aa).

Ser102 serves as the catalytic Phosphoserine intermediate. Mg(2+) is bound by residues Ser102, Asp243, Asp245, and Asp247. Residue Ser102 is modified to Phosphoserine.

Belongs to the phosphohexose mutase family. Mg(2+) is required as a cofactor. In terms of processing, activated by phosphorylation.

The enzyme catalyses alpha-D-glucosamine 1-phosphate = D-glucosamine 6-phosphate. In terms of biological role, catalyzes the conversion of glucosamine-6-phosphate to glucosamine-1-phosphate. The polypeptide is Phosphoglucosamine mutase (Brucella anthropi (strain ATCC 49188 / DSM 6882 / CCUG 24695 / JCM 21032 / LMG 3331 / NBRC 15819 / NCTC 12168 / Alc 37) (Ochrobactrum anthropi)).